Here is a 496-residue protein sequence, read N- to C-terminus: MAKPEEVSVPIFTSLEPVYGEGSLLQEATQRFDVLKANFNDVFGASPQLFARSPGRVNLIGEHIDYEGYSVLPMAIRQDTIIAIRKCEDQKQLRIANVNDKYTMCTYPADPDQEIDLKNHKWGHYFICAYKGFHEYAKSKGVNLGSPVGLDVLVDGIVPTGSGLSSSAAFVCSATIAIMAVFGHNFEKKELAQLTCECERHIGTQSGGMDQAISIMAKTGFAELIDFNPVRATDVKLPDGGSFVIAHSLAESQKAVTAAKNYNNRVVECRLASIILGVKLGMEPKEAISKVKTLSDVEGLCVSFAGDRGSSDPLLAVKEYLKEEPYTAEEIEKILEEKLPSIVNNDPTSLAVLNAATHFKLHQRAAHVYSEARRVHGFKDTVNSNLSDEEKLKKLGDLMNESHYSCSVLYECSCPELEELVQVCKENGALGARLTGAGWGGCAVALVKEFDVTQFIPAVKEKYYKKRVEKGVVKKEDMELYLFASKPSSGAAIFNL.

An N-acetylalanine modification is found at A2. The alpha-D-galactose site is built by R56, E62, H63, and D65. 4 residues coordinate ATP: G161, G163, S165, and S166. D210 lines the alpha-D-galactose pocket. The active-site Proton acceptor is D210. Residues S252, Q253, and K254 each contribute to the ATP site. Residue Y262 participates in alpha-D-galactose binding.

It belongs to the GHMP kinase family. GalK subfamily. Mg(2+) is required as a cofactor. The cofactor is Mn(2+). Requires Ca(2+) as cofactor. As to expression, expressed in roots, stems, leaves, flowers and young siliques. Higher expression in the elongating middle stem region than in the lower or upper stem region.

The catalysed reaction is alpha-D-galactose + ATP = alpha-D-galactose 1-phosphate + ADP + H(+). Its pathway is carbohydrate metabolism; galactose metabolism. Functionally, sugar-1-kinase with a very high substrate specificity for the alpha-anomeric configuration of D-galacose (D-Gal). Also efficiently converts 2-deoxy-D-Gal to 2-deoxy-D-al-1-phosphate. The chain is Galactokinase (GAL1) from Arabidopsis thaliana (Mouse-ear cress).